The sequence spans 278 residues: uncharacterized protein (278 aa).

This is an uncharacterized protein from Escherichia coli (strain K12).